The primary structure comprises 396 residues: Elongation factor Tu (396 aa).

Residues 10–206 (KPHCNIGTIG…AVDAYIPQPE (197 aa)) enclose the tr-type G domain. Residues 19 to 26 (GHVDHGKT) form a G1 region. A GTP-binding site is contributed by 19 to 26 (GHVDHGKT). Thr26 serves as a coordination point for Mg(2+). The tract at residues 60-64 (GITIS) is G2. Residues 81–84 (DCPG) form a G3 region. GTP is bound by residues 81–85 (DCPGH) and 136–139 (NKCD). Residues 136-139 (NKCD) form a G4 region. Positions 174–176 (SAL) are G5.

This sequence belongs to the TRAFAC class translation factor GTPase superfamily. Classic translation factor GTPase family. EF-Tu/EF-1A subfamily. Monomer.

Its subcellular location is the cytoplasm. It carries out the reaction GTP + H2O = GDP + phosphate + H(+). GTP hydrolase that promotes the GTP-dependent binding of aminoacyl-tRNA to the A-site of ribosomes during protein biosynthesis. The sequence is that of Elongation factor Tu from Nitrobacter winogradskyi (strain ATCC 25391 / DSM 10237 / CIP 104748 / NCIMB 11846 / Nb-255).